The sequence spans 337 residues: tRNA N6-adenosine threonylcarbamoyltransferase (337 aa).

2 residues coordinate Fe cation: His-114 and His-118. Substrate is bound by residues 136–140 (LVSGG), Asp-169, Gly-182, Asp-186, and Asn-275. Residue Asp-301 participates in Fe cation binding.

It belongs to the KAE1 / TsaD family. Fe(2+) is required as a cofactor.

It localises to the cytoplasm. The enzyme catalyses L-threonylcarbamoyladenylate + adenosine(37) in tRNA = N(6)-L-threonylcarbamoyladenosine(37) in tRNA + AMP + H(+). Functionally, required for the formation of a threonylcarbamoyl group on adenosine at position 37 (t(6)A37) in tRNAs that read codons beginning with adenine. Is involved in the transfer of the threonylcarbamoyl moiety of threonylcarbamoyl-AMP (TC-AMP) to the N6 group of A37, together with TsaE and TsaB. TsaD likely plays a direct catalytic role in this reaction. This chain is tRNA N6-adenosine threonylcarbamoyltransferase, found in Streptococcus thermophilus (strain ATCC BAA-491 / LMD-9).